Reading from the N-terminus, the 363-residue chain is B3 domain-containing transcription factor LEC2 (363 aa).

The tract at residues 1–27 (MDNFLPFPSSNANSVQELSMDPNNNRS) is disordered. Residues 8-27 (PSSNANSVQELSMDPNNNRS) are compositionally biased toward polar residues. The segment at residues 171–272 (CEKELKNSDV…NLYFAMNGNS (102 aa)) is a DNA-binding region (TF-B3). A disordered region spans residues 331–351 (QHHQATSSSMPPEDHAYVGSS).

It localises to the nucleus. Its function is as follows. Transcription regulator that plays a central role in embryo development. Required for the maintenance of suspensor morphology, specification of cotyledon identity, progression through the maturation phase and suppression of premature germination. Ectopic expression is sufficient to promote somatic embryogenesis. This is B3 domain-containing transcription factor LEC2 (LEC2) from Arabidopsis thaliana (Mouse-ear cress).